The following is a 2547-amino-acid chain: Piezo-type mechanosensitive ion channel component 1 (2547 aa).

Residues 1–12 (MEPHVLGAGLYW) lie on the Cytoplasmic side of the membrane. The chain crosses the membrane as a helical span at residues 13-25 (LLLPCTLLAASLL). Over 26–28 (RFN) the chain is Extracellular. A helical transmembrane segment spans residues 29–44 (ALSLVYLLFLLLLPWL). The Cytoplasmic portion of the chain corresponds to 45–58 (PGPSRHSIPGHTGR). A helical transmembrane segment spans residues 59 to 81 (LLRALLCLSLLFLVAHLAFQICL). Residues 82–121 (HTVPHLDQFLGQNGSLWVKVSQHIGVTRLDLKDIFNTTRL) are Extracellular-facing. Residue Asn94 is glycosylated (N-linked (GlcNAc...) asparagine). Residues 122 to 138 (VAPDLGVLLASSLCLGL) form a helical membrane-spanning segment. The Cytoplasmic portion of the chain corresponds to 139–201 (CGRLTRKAGQ…ASRFRVTAHW (63 aa)). Residues 202 to 221 (LLMTSGRTLVIVLLALAGIA) traverse the membrane as a helical segment. At 222–223 (HP) the chain is on the extracellular side. Residues 224-243 (SAFSSIYLVVFLAICTWWSC) form a helical membrane-spanning segment. Residues 244-254 (HFPLSPLGFNT) are Cytoplasmic-facing. Residues 255–275 (LCVMVSCFGAGHLICLYCYQT) traverse the membrane as a helical segment. Over 276 to 316 (PFIQDMLPPGNIWARLFGLKNFVDLPNYSSPNALVLNTKHA) the chain is Extracellular. The chain crosses the membrane as a helical span at residues 317-337 (WPIYVSPGILLLLYYTATSLL). Topologically, residues 338–424 (KLHKSCPSEL…EMSPLHGLGH (87 aa)) are cytoplasmic. Residues 347-387 (LRKETPREDEEHELELDHLEPEPQARDATQGEMPMTTEPDL) are disordered. The span at 361-371 (ELDHLEPEPQA) shows a compositional bias: basic and acidic residues. A helical transmembrane segment spans residues 425–445 (LIMDQSYVCALIAMMVWSIMY). The Extracellular segment spans residues 446–447 (HS). The chain crosses the membrane as a helical span at residues 448-463 (WLTFVLLLWACLIWTV). The Cytoplasmic portion of the chain corresponds to 464–468 (RSRHQ). Residues 469 to 491 (LAMLCSPCILLYGLTLCCLRYVW) traverse the membrane as a helical segment. Over 492-518 (AMELPELPTTLGPVSLHQLGLEHTRYP) the chain is Extracellular. The helical transmembrane segment at 519 to 536 (CLDLGAMLLYLLTFWLLL) threads the bilayer. Residues 537–580 (RQFVKEKLLKKQKVPAALLEVTVADTEPTQTQTLLRSLGELVTG) lie on the Cytoplasmic side of the membrane. A helical transmembrane segment spans residues 581-601 (IYVKYWIYVCAGMFIVVSFAG). Arg602 is a topological domain (extracellular). A helical membrane pass occupies residues 603–623 (LVVYKIVYMFLFLLCLTLFQV). At 624 to 633 (YYTLWRKLLR) the chain is on the cytoplasmic side. Residues 634–655 (VFWWLVVAYTMLVLIAVYTFQF) traverse the membrane as a helical segment. Over 656-685 (QDFPTYWRNLTGFTDEQLGDLGLEQFSVSE) the chain is Extracellular. The chain crosses the membrane as a helical span at residues 686–702 (LFSSILIPGFFLLACIL). The Cytoplasmic segment spans residues 703-811 (QLHYFHRPFM…RRLLELHVFK (109 aa)). Position 758 is a phosphoserine (Ser758). A helical membrane pass occupies residues 812-823 (LVALYTVWVALK). Residues 824 to 826 (EVS) are Extracellular-facing. Residues 827–840 (VMNLLLVVLWAFAL) form a helical membrane-spanning segment. The Cytoplasmic portion of the chain corresponds to 841–854 (PYPRFRPMASCLST). Residues 855 to 869 (VWTCIIIVCKMLYQL) traverse the membrane as a helical segment. Residues 870-921 (KIVNPHEYSSNCTEPFPNNTNLQPLEINQSLLYRGPVDPANWFGVRKGYPNL) are Extracellular-facing. The helical transmembrane segment at 922–949 (GYIQNHLQILLLLVFEAVVYRRQEHYRR) threads the bilayer. Residues 950-989 (QHQQAPLPAQAVCADGTRQRLDQDLLSCLKYFINFFFYKF) lie on the Cytoplasmic side of the membrane. A helical membrane pass occupies residues 990–1005 (GLEICFLMAVNVIGQR). Residues 1006-1007 (MN) are Extracellular-facing. The chain crosses the membrane as a helical span at residues 1008–1023 (FMVILHGCWLVAILTR). Over 1024–1036 (RRREAIARLWPNY) the chain is Cytoplasmic. A helical transmembrane segment spans residues 1037–1052 (CLFLTLFLLYQYLLCL). Over 1053-1091 (GMPPALCIDYPWRWSKAIPMNSALIKWLYLPDFFRAPNS) the chain is Extracellular. The helical transmembrane segment at 1092–1113 (TNLISDFLLLLCASQQWQVFSA) threads the bilayer. Over 1114–1148 (ERTEEWQRMAGINTDHLEPLRGEPNPIPNFIHCRS) the chain is Cytoplasmic. The helical transmembrane segment at 1149–1175 (YLDMLKVAVFRYLFWLVLVVVFVAGAT) threads the bilayer. Residues 1176-1180 (RISIF) lie on the Extracellular side of the membrane. A helical transmembrane segment spans residues 1181–1199 (GLGYLLACFYLLLFGTTLL). The Cytoplasmic segment spans residues 1200 to 1212 (QKDTRAQLVLWDC). A helical membrane pass occupies residues 1213–1231 (LILYNVTVIISKNMLSLLS). At 1232-1280 (CVFVEQMQSNFCWVIQLFSLVCTVKGYYDPKEMMTRDRDCLLPVEEAGI) the chain is on the extracellular side. A helical transmembrane segment spans residues 1281-1297 (IWDSICFFFLLLQRRIF). Residues 1298–1656 (LSHYFLHVSA…ELLLDRRLHI (359 aa)) are Cytoplasmic-facing. Positions 1334–1365 (HRQIEEKSLAQLKRQMKRIRAKQEKYRQSQAS) form a coiled coil. 3 disordered regions span residues 1354 to 1396 (AKQE…RRQW), 1456 to 1480 (RRER…DVEP), and 1567 to 1610 (TLSG…NTRS). The segment covering 1361-1372 (QSQASRGQLQSK) has biased composition (polar residues). The span at 1376-1392 (DPSQEPGPDSPGGSSPP) shows a compositional bias: low complexity. Ser1385 and Ser1390 each carry phosphoserine. Positions 1592–1610 (SSMTDDTSSPLSTGYNTRS) are enriched in polar residues. 3 positions are modified to phosphoserine: Ser1627, Ser1631, and Ser1646. The chain crosses the membrane as a helical span at residues 1657–1700 (PELEEAERFEAQQGRTLRLLRAGYQCVAAHSELLCYFIIILNHM). Residues 1701 to 1704 (VTAS) are Extracellular-facing. The chain crosses the membrane as a helical span at residues 1705-1720 (AASLVLPVLVFLWAML). Topologically, residues 1721-1728 (TIPRPSKR) are cytoplasmic. The chain crosses the membrane as a helical span at residues 1729-1747 (FWMTAIVFTEVMVVTKYLF). The Extracellular segment spans residues 1748-1779 (QFGFFPWNSYVVLRRYENKPYFPPRILGLEKT). Residues 1780 to 1801 (DSYIKYDLVQLMALFFHRSQLL) form a helical membrane-spanning segment. The Cytoplasmic segment spans residues 1802–1976 (CYGLWDHEED…HTKYRAATDV (175 aa)). Basic and acidic residues-rich tracts occupy residues 1816-1837 (DHCR…KLES) and 1855-1880 (PRDH…DLKP). A disordered region spans residues 1816–1931 (DHCRSSVKDR…RPRHTQEKSK (116 aa)). The segment covering 1881 to 1894 (RHTRHISIRFRRRK) has biased composition (basic residues). Residues 1912-1931 (GEGKETTERKRPRHTQEKSK) show a composition bias toward basic and acidic residues. A helical membrane pass occupies residues 1977–1996 (YALMFLADIVDIIIIIFGFW). Residues 1997–2016 (AFGKHSAATDIASSLSDDQV) lie on the Extracellular side of the membrane. A helical transmembrane segment spans residues 2017–2033 (PQAFLFMLLVQFGTMVI). Residues 2034–2047 (DRALYLRKTVLGKL) are Cytoplasmic-facing. The chain crosses the membrane as a helical span at residues 2048 to 2068 (AFQVVLVVAIHIWMFFILPAV). The Extracellular portion of the chain corresponds to 2069-2076 (TERMFSQN). Residues 2077-2092 (AVAQLWYFVKCIYFAL) form a helical membrane-spanning segment. At 2093-2192 (SAYQIRCGYP…KKKIVKYGMG (100 aa)) the chain is on the cytoplasmic side. The helical transmembrane segment at 2193 to 2213 (GLIILFLIAIIWFPLLFMSLI) threads the bilayer. Residues 2214-2457 (RSVVGVVNQP…IFSDKVSPPS (244 aa)) are Extracellular-facing. Cys2437 and Cys2441 are oxidised to a cystine. The helical transmembrane segment at 2458-2478 (LGFLAGYGIVGLYVSIVLVVG) threads the bilayer. Residues 2479–2547 (KFVRGFFSEI…TMIKWTRERE (69 aa)) are Cytoplasmic-facing.

This sequence belongs to the PIEZO (TC 1.A.75) family. In terms of assembly, homotrimer; the homotrimer forms a propeller-shaped Piezo channel with a cation-ion conducting pore. Heterotrimeric interaction may occur between PIEZO1 and PIEZO2. Interacts with PKD2. Interacts with STOMl3. Interacts with TMC1, TMC2, PCDG15 and CIB2; the interaction may be part of the MET complex. Interacts with MDFIC (via C-terminus); the interaction prolongs Piezo channel inactivation. Interacts with MDFI (via C-terminus); the interaction prolongs Piezo channel inactivation. In terms of tissue distribution, expressed in bladder, colon, kidney and skin. Also expressed in bone marrow, liver, lung, spleen and erythrocytes (at protein level). Expressed in myoblasts (at protein level). Expressed in red blood cells. Expressed in cochlear inner and outer hair cells (IHCs and OHCs) and vestibular organ HCs.

The protein resides in the endoplasmic reticulum membrane. Its subcellular location is the endoplasmic reticulum-Golgi intermediate compartment membrane. It is found in the cell membrane. It localises to the cell projection. The protein localises to the lamellipodium membrane. It catalyses the reaction K(+)(in) = K(+)(out). It carries out the reaction Na(+)(in) = Na(+)(out). The enzyme catalyses Ca(2+)(in) = Ca(2+)(out). The catalysed reaction is Mg(2+)(in) = Mg(2+)(out). With respect to regulation, regulated by auxillary subunits MDFIC and MDFI. Down-regulated by phosphatidylserines exposed on the cell surface. Divalent ions decrease the single-channel permeability of K(+). Pore-forming subunit of the mechanosensitive non-specific cation Piezo channel required for rapidly adapting mechanically activated (MA) currents and has a key role in sensing touch and tactile pain. Piezo channels are homotrimeric three-blade propeller-shaped structures that utilize a cap-motion and plug-and-latch mechanism to gate their ion-conducting pathways. Generates currents characterized by a linear current-voltage relationship that are sensitive to ruthenium red and gadolinium. Conductance to monovalent alkali ions is highest for K(+), intermediate for Na(+) and lowest for Li(+). Divalent ions except for Mn(2+) permeate the channel but more slowly than the monovalent ions and they also reduce K(+) currents. Plays a key role in epithelial cell adhesion by maintaining integrin activation through R-Ras recruitment to the ER, most probably in its activated state, and subsequent stimulation of calpain signaling. In inner ear hair cells, PIEZO1/2 subunits may constitute part of the mechanotransducer (MET) non-selective cation channel complex where they may act as pore-forming ion-conducting component in the complex. In the kidney, may contribute to the detection of intraluminal pressure changes and to urine flow sensing. Acts as a shear-stress sensor that promotes endothelial cell organization and alignment in the direction of blood flow through calpain activation. Plays a key role in blood vessel formation and vascular structure in both development and adult physiology. Acts as a sensor of phosphatidylserine (PS) flipping at the plasma membrane and governs morphogenesis of muscle cells. In myoblasts, flippase-mediated PS enrichment at the inner leaflet of plasma membrane triggers channel activation and Ca(2+) influx followed by Rho GTPases signal transduction, leading to assembly of cortical actomyosin fibers and myotube formation. In Mus musculus (Mouse), this protein is Piezo-type mechanosensitive ion channel component 1.